A 224-amino-acid chain; its full sequence is UPF0173 metal-dependent hydrolase TON_1314 (224 aa).

Belongs to the UPF0173 family.

The chain is UPF0173 metal-dependent hydrolase TON_1314 from Thermococcus onnurineus (strain NA1).